Consider the following 446-residue polypeptide: Exodeoxyribonuclease 7 large subunit (446 aa).

This sequence belongs to the XseA family. In terms of assembly, heterooligomer composed of large and small subunits.

It localises to the cytoplasm. The catalysed reaction is Exonucleolytic cleavage in either 5'- to 3'- or 3'- to 5'-direction to yield nucleoside 5'-phosphates.. Its function is as follows. Bidirectionally degrades single-stranded DNA into large acid-insoluble oligonucleotides, which are then degraded further into small acid-soluble oligonucleotides. The protein is Exodeoxyribonuclease 7 large subunit of Ligilactobacillus salivarius (strain UCC118) (Lactobacillus salivarius).